Consider the following 112-residue polypeptide: ATP synthase subunit c (112 aa).

Helical transmembrane passes span 36 to 56 (FSVLAAGLGLGVAALGGAIGM) and 81 to 101 (MFIALAMIEAQVIYALVIALI).

It belongs to the ATPase C chain family. F-type ATPases have 2 components, F(1) - the catalytic core - and F(0) - the membrane proton channel. F(1) has five subunits: alpha(3), beta(3), gamma(1), delta(1), epsilon(1). F(0) has three main subunits: a(1), b(2) and c(10-14). The alpha and beta chains form an alternating ring which encloses part of the gamma chain. F(1) is attached to F(0) by a central stalk formed by the gamma and epsilon chains, while a peripheral stalk is formed by the delta and b chains.

The protein resides in the cell inner membrane. In terms of biological role, f(1)F(0) ATP synthase produces ATP from ADP in the presence of a proton or sodium gradient. F-type ATPases consist of two structural domains, F(1) containing the extramembraneous catalytic core and F(0) containing the membrane proton channel, linked together by a central stalk and a peripheral stalk. During catalysis, ATP synthesis in the catalytic domain of F(1) is coupled via a rotary mechanism of the central stalk subunits to proton translocation. The polypeptide is ATP synthase subunit c (Campylobacter jejuni subsp. jejuni serotype O:2 (strain ATCC 700819 / NCTC 11168)).